A 226-amino-acid polypeptide reads, in one-letter code: AA9 family lytic polysaccharide monooxygenase E (226 aa).

An N-terminal signal peptide occupies residues 1 to 18; it reads MLANGAIVFLAAALGVSG. A Cu(2+)-binding site is contributed by histidine 19. Disulfide bonds link cysteine 56/cysteine 174 and cysteine 144/cysteine 226. Asparagine 69 carries N-linked (GlcNAc...) asparagine glycosylation. Position 86 (histidine 86) interacts with Cu(2+). O2-binding residues include histidine 160 and glutamine 169. Tyrosine 171 lines the Cu(2+) pocket.

This sequence belongs to the polysaccharide monooxygenase AA9 family. Cu(2+) is required as a cofactor.

It localises to the secreted. It carries out the reaction [(1-&gt;4)-beta-D-glucosyl]n+m + reduced acceptor + O2 = 4-dehydro-beta-D-glucosyl-[(1-&gt;4)-beta-D-glucosyl]n-1 + [(1-&gt;4)-beta-D-glucosyl]m + acceptor + H2O.. Lytic polysaccharide monooxygenase (LPMO) that depolymerizes crystalline and amorphous polysaccharides via the oxidation of scissile alpha- or beta-(1-4)-glycosidic bonds, yielding C1 and C4 oxidation products. Catalysis by LPMOs requires the reduction of the active-site copper from Cu(II) to Cu(I) by a reducing agent and H(2)O(2) or O(2) as a cosubstrate. Shows endoglucanase activity on tamarind xyloglucan, as well as on beechwood xylan when combined with phosphoric acid swollen cellulose (PASC). Shows no activity on wheat arabinoxylan, konjac glucomannan, acetylated spruce galactoglucomannan, or cellopentaose. In Thermothielavioides terrestris (strain ATCC 38088 / NRRL 8126) (Thielavia terrestris), this protein is AA9 family lytic polysaccharide monooxygenase E.